The primary structure comprises 260 residues: 5-oxoprolinase subunit A 2 (260 aa).

It belongs to the LamB/PxpA family. In terms of assembly, forms a complex composed of PxpA, PxpB and PxpC.

It catalyses the reaction 5-oxo-L-proline + ATP + 2 H2O = L-glutamate + ADP + phosphate + H(+). Catalyzes the cleavage of 5-oxoproline to form L-glutamate coupled to the hydrolysis of ATP to ADP and inorganic phosphate. This chain is 5-oxoprolinase subunit A 2, found in Ralstonia nicotianae (strain ATCC BAA-1114 / GMI1000) (Ralstonia solanacearum).